Consider the following 73-residue polypeptide: Large ribosomal subunit protein bL31 (73 aa).

The protein belongs to the bacterial ribosomal protein bL31 family. Type A subfamily. As to quaternary structure, part of the 50S ribosomal subunit.

Functionally, binds the 23S rRNA. This chain is Large ribosomal subunit protein bL31, found in Paracoccus denitrificans (strain Pd 1222).